Consider the following 268-residue polypeptide: Putative ABC transporter ATP-binding protein LMOf2365_1216 (268 aa).

The region spanning 2 to 237 (LKTEHISFQY…KSNVEQAGLV (236 aa)) is the ABC transporter domain. 35-42 (GANGSGKS) is an ATP binding site.

It belongs to the ABC transporter superfamily.

It localises to the cell membrane. In terms of biological role, probably part of an ABC transporter complex. Responsible for energy coupling to the transport system. This is Putative ABC transporter ATP-binding protein LMOf2365_1216 from Listeria monocytogenes serotype 4b (strain F2365).